We begin with the raw amino-acid sequence, 376 residues long: Putative phosphoserine aminotransferase (376 aa).

A disordered region spans residues 1–30; it reads MADQLTPSLDIPAALKPRDGRFGSGPSKVR. Residue Arg50 coordinates L-glutamate. Pyridoxal 5'-phosphate contacts are provided by residues 84 to 85, Phe108, Thr154, Asp176, and Gln199; that span reads AT. At Lys200 the chain carries N6-(pyridoxal phosphate)lysine. A pyridoxal 5'-phosphate-binding site is contributed by 251–252; that stretch reads NT.

Belongs to the class-V pyridoxal-phosphate-dependent aminotransferase family. SerC subfamily. Homodimer. The cofactor is pyridoxal 5'-phosphate.

The protein localises to the cytoplasm. The enzyme catalyses O-phospho-L-serine + 2-oxoglutarate = 3-phosphooxypyruvate + L-glutamate. It catalyses the reaction 4-(phosphooxy)-L-threonine + 2-oxoglutarate = (R)-3-hydroxy-2-oxo-4-phosphooxybutanoate + L-glutamate. Its pathway is amino-acid biosynthesis; L-serine biosynthesis; L-serine from 3-phospho-D-glycerate: step 2/3. It functions in the pathway cofactor biosynthesis; pyridoxine 5'-phosphate biosynthesis; pyridoxine 5'-phosphate from D-erythrose 4-phosphate: step 3/5. Its function is as follows. Catalyzes the reversible conversion of 3-phosphohydroxypyruvate to phosphoserine and of 3-hydroxy-2-oxo-4-phosphonooxybutanoate to phosphohydroxythreonine. The protein is Putative phosphoserine aminotransferase of Mycobacterium leprae (strain TN).